The chain runs to 876 residues: GRB2-associated and regulator of MAPK protein (876 aa).

Residues 12 to 320 (KDVKWSPVAM…HQVKGDMWPE (309 aa)) are CABIT. Tyrosine 105 is modified (phosphotyrosine). The tract at residues 427-448 (GDSGSDYLFPEANEESAGIPGK) is disordered. At tyrosine 453 the chain carries Phosphotyrosine. Disordered regions lie at residues 460-501 (EGKP…ATLG) and 530-572 (LNAP…SYYS). A necessary for interaction with GRB2 region spans residues 498–550 (ATLGATIKSSEIALPPPPVPPKSEAVREECRLLNAPPVPPRSAKPLSTSPSIP). The segment covering 560-572 (QTRSPSPTLSYYS) has biased composition (polar residues). Residues serine 609 and serine 613 each carry the phosphoserine modification. Composition is skewed to polar residues over residues 630 to 639 (SGASENQTRS) and 647 to 657 (RSYSYPRQKTP). Disordered regions lie at residues 630-664 (SGASENQTRSDFLLDPSRSYSYPRQKTPGTPKRTC) and 722-759 (CPALPPRAPKPVEQKATPETSPLPLKIDGAEEDPTAGS). Residues 811–876 (LSIEEVSKSL…QFINGWRPKI (66 aa)) form the SAM domain.

It belongs to the GAREM family. Interacts with EGFR. Interacts (via proline-rich domain and phosphorylated at Tyr-105 and Tyr-453) with GRB2 (via SH3 domains); the interaction occurs upon EGF stimulation. Interacts (phosphorylated at Tyr-453) with PTPN11; the interaction increases MAPK/ERK activity and does not affect the GRB2/SOS complex formation. On EGF stimulation, phosphorylated on Tyr-105 and Tyr-453.

In terms of biological role, acts as an adapter protein that plays a role in intracellular signaling cascades triggered either by the cell surface activated epidermal growth factor receptor and/or cytoplasmic protein tyrosine kinases. Promotes activation of the MAPK/ERK signaling pathway. Plays a role in the regulation of cell proliferation. The chain is GRB2-associated and regulator of MAPK protein (Garem1) from Mus musculus (Mouse).